Reading from the N-terminus, the 77-residue chain is ATP synthase subunit c (77 aa).

The next 2 helical transmembrane spans lie at 13-33 (IATV…GIVA) and 55-75 (FLGI…YFIF).

It belongs to the ATPase C chain family. As to quaternary structure, F-type ATPases have 2 components, F(1) - the catalytic core - and F(0) - the membrane proton channel. F(1) has five subunits: alpha(3), beta(3), gamma(1), delta(1), epsilon(1). F(0) has three main subunits: a(1), b(2) and c(10-14). The alpha and beta chains form an alternating ring which encloses part of the gamma chain. F(1) is attached to F(0) by a central stalk formed by the gamma and epsilon chains, while a peripheral stalk is formed by the delta and b chains.

It is found in the cell membrane. Its function is as follows. F(1)F(0) ATP synthase produces ATP from ADP in the presence of a proton or sodium gradient. F-type ATPases consist of two structural domains, F(1) containing the extramembraneous catalytic core and F(0) containing the membrane proton channel, linked together by a central stalk and a peripheral stalk. During catalysis, ATP synthesis in the catalytic domain of F(1) is coupled via a rotary mechanism of the central stalk subunits to proton translocation. Functionally, key component of the F(0) channel; it plays a direct role in translocation across the membrane. A homomeric c-ring of between 10-14 subunits forms the central stalk rotor element with the F(1) delta and epsilon subunits. The chain is ATP synthase subunit c from Clavibacter michiganensis subsp. michiganensis (strain NCPPB 382).